A 297-amino-acid chain; its full sequence is Glucuronoxylan 4-O-methyltransferase 3 (297 aa).

A helical membrane pass occupies residues 9–29 (LNLKVIFIGSSILILIIIYLA). Low complexity predominate over residues 35-47 (SSSSKPISKTNLS). Residues 35–63 (SSSSKPISKTNLSQEEEETQHKQEGCPTT) are disordered.

The protein belongs to the methyltransferase superfamily. Expressed in hypocotyls, roots, rosette leaves, stems and siliques.

The protein resides in the golgi apparatus membrane. It carries out the reaction glucuronoxylan D-glucuronate + n S-adenosyl-L-methionine = glucuronoxylan 4-O-methyl-D-glucuronate + n S-adenosyl-L-homocysteine + n H(+). In terms of biological role, methyltransferase catalyzing 4-O-methylation of glucuronic acid side chains on xylan. The protein is Glucuronoxylan 4-O-methyltransferase 3 (GXM3) of Arabidopsis thaliana (Mouse-ear cress).